The following is a 253-amino-acid chain: 5'-nucleotidase SurE (253 aa).

A divalent metal cation is bound by residues D8, D9, S40, and N93.

This sequence belongs to the SurE nucleotidase family. A divalent metal cation is required as a cofactor.

Its subcellular location is the cytoplasm. It catalyses the reaction a ribonucleoside 5'-phosphate + H2O = a ribonucleoside + phosphate. Nucleotidase that shows phosphatase activity on nucleoside 5'-monophosphates. In Haemophilus ducreyi (strain 35000HP / ATCC 700724), this protein is 5'-nucleotidase SurE.